We begin with the raw amino-acid sequence, 656 residues long: Anion exchange transporter (656 aa).

The Cytoplasmic portion of the chain corresponds to 1-75 (MTGAKRKKRS…LSFAMLSSVH (75 aa)). A helical membrane pass occupies residues 76–96 (PVFGLYGSLFPAIIYAIFGMG). Residues 97-144 (RHVATGTFALTSLISANAVERLVPQSSRNLTTQSNSSVLGLSEFELQR) lie on the Extracellular side of the membrane. Residues 145 to 165 (IGVAAAVSFLGGVIQLVMFVL) form a helical membrane-spanning segment. A topological domain (cytoplasmic) is located at residue Gln-166. A helical membrane pass occupies residues 167–187 (LGSATFLLTEPVISAMTTGAA). Residues 188–199 (THVVTSQVKYLL) lie on the Extracellular side of the membrane. A helical membrane pass occupies residues 200–220 (GIKMPYISGPLGFFYIYAYVF). At 221–222 (EN) the chain is on the cytoplasmic side. A helical transmembrane segment spans residues 223–243 (IKSVQLEALLFSLLSIIVLVL). Over 244–254 (VKELNEQFKRK) the chain is Extracellular. The chain crosses the membrane as a helical span at residues 255 to 275 (IKVVLPVDLVLIIAASFACYC). Topologically, residues 276–306 (TNMENTYGLEVVGHIPNGIPPPRAPPMNILS) are cytoplasmic. The helical transmembrane segment at 307-327 (AVLTEAFGVALVGYVASLALA) threads the bilayer. At 328-343 (QGSAKKFKYSVDDNQE) the chain is on the extracellular side. Residues 344–364 (FLAHGLSNVIPSFLFCIPSAA) traverse the membrane as a helical segment. At 365-383 (AMGRTAGLYSTGAKTQVAC) the chain is on the cytoplasmic side. Helical transmembrane passes span 384–404 (LISC…LYWL) and 405–425 (PMCV…IQFR). At 426–448 (DLKKYWNVDKIDWGIWISTYIFT) the chain is on the extracellular side. The helical transmembrane segment at 449-469 (ICFAANVGLLFGVICTIAIVL) threads the bilayer. The Cytoplasmic portion of the chain corresponds to 470–656 (GRFPRAKTLS…LSKASDHSEV (187 aa)). An STAS domain is found at 492–641 (TEMHDETSQQ…DSVPAAISII (150 aa)). Positions 641–656 (IQSNKNLSKASDHSEV) are membrane targeting.

This sequence belongs to the SLC26A/SulP transporter (TC 2.A.53) family. Expressed in the Reissner's membrane epithelial cells in the cochlea (at protein level). Expressed in the retinal pigment epithelium (at protein level). Abundantly expressed in parietal cells on the glandular portion of the stomach. Lower levels are observed in the kidney, with expression in the proximal tubule and thick ascending limb of the loop of Henle. Also expressed in distal segments of nephron, in extraglomerular mesagial cells and a subpopulation of intercalated cells of outer medullary collecting ducts. Expressed in the thyroid gland.

It localises to the basolateral cell membrane. It is found in the recycling endosome membrane. The protein resides in the apical cell membrane. Its subcellular location is the lateral cell membrane. It carries out the reaction chloride(in) = chloride(out). The catalysed reaction is iodide(out) = iodide(in). It catalyses the reaction bromide(in) = bromide(out). The enzyme catalyses oxalate(in) = oxalate(out). It carries out the reaction nitrate(in) = nitrate(out). The catalysed reaction is sulfate(in) = sulfate(out). It catalyses the reaction hydrogencarbonate(in) = hydrogencarbonate(out). The enzyme catalyses D-gluconate(in) = D-gluconate(out). It carries out the reaction thiocyanate(in) = thiocyanate(out). The catalysed reaction is hydrogencarbonate(in) + chloride(out) = hydrogencarbonate(out) + chloride(in). With respect to regulation, regulated by pH. Activity inhibited by all inhibitors of several anion channels and transporters, including 4,4'-Di-isothiocyanatostilbene-2,2'-disulfonic acid (DIDS), diphenylamine-2-carboxylic acid, glybenclamide and 5-Nitro-2-(3-phenylpropyl-amino)benzoic acid. Functionally, acts as an anion channel mediating the transport of chloride, bromide, iodide, nitrate, sulfate, gluconate, thiocyanate and bicarbonate ions. Its permeability towards bicarbonate is weak and increases when pH is above 7. Mediates oxalate transport. Mediates thiocyanate transport in retinal pigment epithelium cells. Mediates iodide transport in the thyroid gland, playing an important role in the synthesis of thyroid hormones and the maintenance of thyroid function. Although it is an anion channel, according to PubMed:12736153 and PubMed:19723628 it has been shown to exhibit chloride-bicarbonate exchanger activity. In Mus musculus (Mouse), this protein is Anion exchange transporter.